The primary structure comprises 831 residues: von Willebrand factor A domain-containing protein DDB_G0285981 (831 aa).

The VIT domain occupies 60-188 (RDTFGLKTFS…NVTIHLTIIS (129 aa)). The VWFA domain maps to 312–480 (EFIFLIDCSG…NFEEQVMKLV (169 aa)).

The protein is von Willebrand factor A domain-containing protein DDB_G0285981 of Dictyostelium discoideum (Social amoeba).